Reading from the N-terminus, the 678-residue chain is DNA ligase (678 aa).

NAD(+)-binding positions include 34–38 (DSEYD), 83–84 (SL), and E114. Residue K116 is the N6-AMP-lysine intermediate of the active site. Residues R137, E176, K293, and K317 each coordinate NAD(+). Positions 411, 414, 429, and 435 each coordinate Zn(2+). Residues 594–678 (PTRQPLNGES…LMAGYGQTLS (85 aa)) enclose the BRCT domain.

Belongs to the NAD-dependent DNA ligase family. LigA subfamily. It depends on Mg(2+) as a cofactor. The cofactor is Mn(2+).

The catalysed reaction is NAD(+) + (deoxyribonucleotide)n-3'-hydroxyl + 5'-phospho-(deoxyribonucleotide)m = (deoxyribonucleotide)n+m + AMP + beta-nicotinamide D-nucleotide.. Its function is as follows. DNA ligase that catalyzes the formation of phosphodiester linkages between 5'-phosphoryl and 3'-hydroxyl groups in double-stranded DNA using NAD as a coenzyme and as the energy source for the reaction. It is essential for DNA replication and repair of damaged DNA. In Acinetobacter baumannii (strain SDF), this protein is DNA ligase.